Here is a 165-residue protein sequence, read N- to C-terminus: Sulfopyruvate decarboxylase subunit alpha (165 aa).

This sequence belongs to the ComD family. In terms of assembly, heterododecamer composed of 6 subunits alpha and 6 subunits beta.

It catalyses the reaction 3-sulfopyruvate + H(+) = sulfoacetaldehyde + CO2. Its pathway is cofactor biosynthesis; coenzyme M biosynthesis; sulfoacetaldehyde from phosphoenolpyruvate and sulfite: step 4/4. In terms of biological role, involved in the biosynthesis of the coenzyme M (2-mercaptoethanesulfonic acid). Catalyzes the decarboxylation of sulfopyruvate to sulfoacetaldehyde. In Methanothermobacter thermautotrophicus (strain ATCC 29096 / DSM 1053 / JCM 10044 / NBRC 100330 / Delta H) (Methanobacterium thermoautotrophicum), this protein is Sulfopyruvate decarboxylase subunit alpha.